The sequence spans 252 residues: MPQDNTRISDSIKIPDEFVKLLIVSQSHLGGTSTNKSFARYLYGTRPRDRINIIDINATWEKLIIAARAFCGIKHPSSIAVVSTKTFGRKPVVKFCEAVGATPITGRFIPGSFTNSEVKRVYDPRVLIVSDTYADKQAILESQYCNLPTIAFVNTDNSLVGVDIAIPMNNRSPSAIAAGFFILSRLINYMKTGAELVRDMKEVELFLFRDSVELEQLVEEQLLETTDSILNVGKEGILSGIGTGNADEWNSF.

Belongs to the universal ribosomal protein uS2 family. As to quaternary structure, component of the small ribosomal subunit. Mature ribosomes consist of a small (40S) and a large (60S) subunit. The 40S subunit contains about 33 different proteins and 1 molecule of RNA (18S). The 60S subunit contains about 49 different proteins and 3 molecules of RNA (25S, 5.8S and 5S). Interacts with RPS21.

It localises to the cytoplasm. In terms of biological role, required for the assembly and/or stability of the 40S ribosomal subunit. Required for the processing of the 20S rRNA-precursor to mature 18S rRNA in a late step of the maturation of 40S ribosomal subunits. The polypeptide is Small ribosomal subunit protein uS2 (Encephalitozoon cuniculi (strain GB-M1) (Microsporidian parasite)).